We begin with the raw amino-acid sequence, 239 residues long: THAP domain-containing protein 3 (239 aa).

The THAP-type zinc-finger motif lies at 1 to 82 (MPKSCAARQC…LKHNAVPTVF (82 aa)). 2 disordered regions span residues 88–125 (PQLV…LGRK) and 139–174 (VGGL…PTQP). Positions 176-179 (DHSY) match the HCFC1-binding motif (HBM) motif.

Component of a THAP1/THAP3-HCFC1-OGT complex that contains at least, either THAP1 or THAP3, HCFC1 and OGT. Interacts directly with OGT and HCFC1 (via its HBM).

Its function is as follows. Component of a THAP1/THAP3-HCFC1-OGT complex that is required for the regulation of the transcriptional activity of RRM1. The polypeptide is THAP domain-containing protein 3 (THAP3) (Bos taurus (Bovine)).